The primary structure comprises 538 residues: Cytochrome P450 monooxygenase claO (538 aa).

2 helical membrane-spanning segments follow: residues 7–27 (IGAF…KLVG) and 222–242 (INPS…PILL). Residue Cys-475 participates in heme binding.

The protein belongs to the cytochrome P450 family. Heme is required as a cofactor.

Its subcellular location is the membrane. It participates in secondary metabolite biosynthesis; terpenoid biosynthesis. Its function is as follows. Cytochrome P450 monooxygenase; part of the gene cluster that mediates the biosynthesis of clavilactone A, a meroterpenoid that features a unique benzo-fused ten-membered carbocyclic ring unit with an alpha,beta-epoxy-gamma-lactone moiety, forming an intriguing 10/5/3 tricyclic nested skeleton. Cytochrome P450 monooxygenases claO, claP, claQ, claU, and claW are close orthologs, suggesting that a redundant function or pseudogenes are present in the cla cluster. These monoxygenases are not involved in clavilactone A biosynthesis nor in its modification. ClaR, ClaS and ClaT are sufficient to produce clavilactone A. The biosynthesis begins with the prenyltransferase claS that transfers geranyl pyrophosphate (GPP) to hydroquinone to produces geranylhydroquinone. The cytochrome P450 monooxygenase claR then catalyzes the diradical coupling reaction between the intramolecular hydroquinone and allyl moieties to form the benzo-fused ten-membered carbocyclic ring unit of wigantol. Finally the cytochrome P450 monooxygenase claT exquisitely and stereoselectively assembles the alpha,beta-epoxy-gamma-lactone moiety, producing clavilactone A via arnebinol A. This is Cytochrome P450 monooxygenase claO from Ampulloclitocybe clavipes (Club foot).